The following is a 347-amino-acid chain: DNA primase small subunit PriS (347 aa).

Catalysis depends on residues Asp-95 and Asp-97. Positions 106, 108, 114, and 117 each coordinate Zn(2+). The short motif at 106–117 (CNHEPGTVCPIC) is the Zinc knuckle motif element. Asp-280 is a catalytic residue.

The protein belongs to the eukaryotic-type primase small subunit family. In terms of assembly, heterodimer of a small subunit (PriS) and a large subunit (PriL). Both participate in formation of the active center, but the ATP-binding site is exclusively located on the small subunit. The cofactor is Mg(2+). It depends on Mn(2+) as a cofactor.

Functionally, catalytic subunit of DNA primase, an RNA polymerase that catalyzes the synthesis of short RNA molecules used as primers for DNA polymerase during DNA replication. The small subunit contains the primase catalytic core and has DNA synthesis activity on its own. Binding to the large subunit stabilizes and modulates the activity, increasing the rate of DNA synthesis while decreasing the length of the DNA fragments, and conferring RNA synthesis capability. The DNA polymerase activity may enable DNA primase to also catalyze primer extension after primer synthesis. May also play a role in DNA repair. In Pyrococcus furiosus (strain ATCC 43587 / DSM 3638 / JCM 8422 / Vc1), this protein is DNA primase small subunit PriS.